A 251-amino-acid polypeptide reads, in one-letter code: ATP synthase subunit a (251 aa).

5 helical membrane-spanning segments follow: residues 34 to 54 (VFLTSWFVIGVLVLASVAASS), 93 to 113 (FVGTLFLFIFVSNWSGALVPF), 130 to 150 (INTTVALALLTSLAYFYAGFS), 195 to 215 (LVVGVLVLLVPLFVPLPVMAL), and 216 to 236 (GLFTSAIQALIFATLAAAYIG).

The protein belongs to the ATPase A chain family. As to quaternary structure, F-type ATPases have 2 components, CF(1) - the catalytic core - and CF(0) - the membrane proton channel. CF(1) has five subunits: alpha(3), beta(3), gamma(1), delta(1), epsilon(1). CF(0) has four main subunits: a, b, b' and c.

The protein resides in the cellular thylakoid membrane. Its function is as follows. Key component of the proton channel; it plays a direct role in the translocation of protons across the membrane. The polypeptide is ATP synthase subunit a (Nostoc sp. (strain PCC 7120 / SAG 25.82 / UTEX 2576)).